Consider the following 311-residue polypeptide: 4-hydroxy-3-methylbut-2-enyl diphosphate reductase (311 aa).

Cysteine 12 contributes to the [4Fe-4S] cluster binding site. Residues histidine 43 and histidine 81 each coordinate (2E)-4-hydroxy-3-methylbut-2-enyl diphosphate. Positions 43 and 81 each coordinate dimethylallyl diphosphate. Residues histidine 43 and histidine 81 each coordinate isopentenyl diphosphate. Cysteine 103 is a binding site for [4Fe-4S] cluster. Histidine 131 contributes to the (2E)-4-hydroxy-3-methylbut-2-enyl diphosphate binding site. Histidine 131 lines the dimethylallyl diphosphate pocket. Position 131 (histidine 131) interacts with isopentenyl diphosphate. Glutamate 133 acts as the Proton donor in catalysis. Position 170 (threonine 170) interacts with (2E)-4-hydroxy-3-methylbut-2-enyl diphosphate. Residue cysteine 198 coordinates [4Fe-4S] cluster. The (2E)-4-hydroxy-3-methylbut-2-enyl diphosphate site is built by serine 226, asparagine 228, and serine 271. Dimethylallyl diphosphate contacts are provided by serine 226, asparagine 228, and serine 271. Residues serine 226, asparagine 228, and serine 271 each contribute to the isopentenyl diphosphate site.

It belongs to the IspH family. [4Fe-4S] cluster serves as cofactor.

The catalysed reaction is isopentenyl diphosphate + 2 oxidized [2Fe-2S]-[ferredoxin] + H2O = (2E)-4-hydroxy-3-methylbut-2-enyl diphosphate + 2 reduced [2Fe-2S]-[ferredoxin] + 2 H(+). It carries out the reaction dimethylallyl diphosphate + 2 oxidized [2Fe-2S]-[ferredoxin] + H2O = (2E)-4-hydroxy-3-methylbut-2-enyl diphosphate + 2 reduced [2Fe-2S]-[ferredoxin] + 2 H(+). It functions in the pathway isoprenoid biosynthesis; dimethylallyl diphosphate biosynthesis; dimethylallyl diphosphate from (2E)-4-hydroxy-3-methylbutenyl diphosphate: step 1/1. The protein operates within isoprenoid biosynthesis; isopentenyl diphosphate biosynthesis via DXP pathway; isopentenyl diphosphate from 1-deoxy-D-xylulose 5-phosphate: step 6/6. Its function is as follows. Catalyzes the conversion of 1-hydroxy-2-methyl-2-(E)-butenyl 4-diphosphate (HMBPP) into a mixture of isopentenyl diphosphate (IPP) and dimethylallyl diphosphate (DMAPP). Acts in the terminal step of the DOXP/MEP pathway for isoprenoid precursor biosynthesis. The chain is 4-hydroxy-3-methylbut-2-enyl diphosphate reductase from Brevibacillus brevis (strain 47 / JCM 6285 / NBRC 100599).